Here is a 196-residue protein sequence, read N- to C-terminus: Orotate phosphoribosyltransferase (196 aa).

Residue 117–125 (EDVVTTGLS) participates in 5-phospho-alpha-D-ribose 1-diphosphate binding. Residues T121 and R149 each contribute to the orotate site.

This sequence belongs to the purine/pyrimidine phosphoribosyltransferase family. PyrE subfamily. Homodimer. Mg(2+) is required as a cofactor.

It carries out the reaction orotidine 5'-phosphate + diphosphate = orotate + 5-phospho-alpha-D-ribose 1-diphosphate. It functions in the pathway pyrimidine metabolism; UMP biosynthesis via de novo pathway; UMP from orotate: step 1/2. Its function is as follows. Catalyzes the transfer of a ribosyl phosphate group from 5-phosphoribose 1-diphosphate to orotate, leading to the formation of orotidine monophosphate (OMP). The sequence is that of Orotate phosphoribosyltransferase from Rhizorhabdus wittichii (strain DSM 6014 / CCUG 31198 / JCM 15750 / NBRC 105917 / EY 4224 / RW1) (Sphingomonas wittichii).